The following is a 342-amino-acid chain: Anthranilate phosphoribosyltransferase (342 aa).

5-phospho-alpha-D-ribose 1-diphosphate-binding positions include G83, 86–87, T91, 93–96, 111–119, and S123; these read GD, NIST, and KHGGRSVSS. Residue G83 participates in anthranilate binding. A Mg(2+)-binding site is contributed by S95. Residue R169 participates in anthranilate binding. Mg(2+) contacts are provided by D228 and E229.

The protein belongs to the anthranilate phosphoribosyltransferase family. As to quaternary structure, homodimer. Mg(2+) is required as a cofactor.

The catalysed reaction is N-(5-phospho-beta-D-ribosyl)anthranilate + diphosphate = 5-phospho-alpha-D-ribose 1-diphosphate + anthranilate. Its pathway is amino-acid biosynthesis; L-tryptophan biosynthesis; L-tryptophan from chorismate: step 2/5. Catalyzes the transfer of the phosphoribosyl group of 5-phosphorylribose-1-pyrophosphate (PRPP) to anthranilate to yield N-(5'-phosphoribosyl)-anthranilate (PRA). In Chromobacterium violaceum (strain ATCC 12472 / DSM 30191 / JCM 1249 / CCUG 213 / NBRC 12614 / NCIMB 9131 / NCTC 9757 / MK), this protein is Anthranilate phosphoribosyltransferase.